A 139-amino-acid chain; its full sequence is Large ribosomal subunit protein eL34 (139 aa).

A disordered region spans residues 113–139 (VSKPPKIAKAPAAAAAAKPAKTATKSK).

It belongs to the eukaryotic ribosomal protein eL34 family.

This chain is Large ribosomal subunit protein eL34 (RpL34), found in Ochlerotatus triseriatus (Eastern treehole mosquito).